Reading from the N-terminus, the 284-residue chain is Tropomyosin beta chain (284 aa).

Met-1 is modified (N-acetylmethionine). Positions 1 to 284 (MEAIKKKMQM…DNALNDITSL (284 aa)) form a coiled coil. 2 stretches are compositionally biased toward basic and acidic residues: residues 22-40 (AEQAEADKKQAEDRCKQLE) and 51-66 (KGTEDEVEKYSESVKE). Positions 22 to 66 (AEQAEADKKQAEDRCKQLEEEQQGLQKKLKGTEDEVEKYSESVKE) are disordered.

It belongs to the tropomyosin family. Homodimer. Heterodimer of an alpha (TPM1, TPM3 or TPM4) and a beta (TPM2) chain.

It is found in the cytoplasm. The protein resides in the cytoskeleton. Functionally, binds to actin filaments in muscle and non-muscle cells. Plays a central role, in association with the troponin complex, in the calcium dependent regulation of vertebrate striated muscle contraction. Smooth muscle contraction is regulated by interaction with caldesmon. In non-muscle cells is implicated in stabilizing cytoskeleton actin filaments. The sequence is that of Tropomyosin beta chain (TPM2) from Gallus gallus (Chicken).